A 402-amino-acid polypeptide reads, in one-letter code: Baeyer-Villiger oxidase notM (402 aa).

The protein belongs to the questin oxidase family.

Baeyer-Villiger oxidase; part of the gene cluster that mediates the biosynthesis of notoamide, a fungal indole alkaloid that belongs to a family of natural products containing a characteristic bicyclo[2.2.2]diazaoctane core. The first step of notoamide biosynthesis involves coupling of L-proline and L-tryptophan by the bimodular NRPS notE, to produce cyclo-L-tryptophan-L-proline called brevianamide F. The reverse prenyltransferase notF then acts as a deoxybrevianamide E synthase and converts brevianamide F to deoxybrevianamide E via reverse prenylation at C-2 of the indole ring leading to the bicyclo[2.2.2]diazaoctane core. Deoxybrevianamide E is further hydroxylated at C-6 of the indole ring, likely catalyzed by the cytochrome P450 monooxygenase notG, to yield 6-hydroxy-deoxybrevianamide E. 6-hydroxy-deoxybrevianamide E is a specific substrate of the prenyltransferase notC for normal prenylation at C-7 to produce 6-hydroxy-7-prenyl-deoxybrevianamide, also called notoamide S. As the proposed pivotal branching point in notoamide biosynthesis, notoamide S can be diverted to notoamide E through an oxidative pyran ring closure putatively catalyzed by either notH cytochrome P450 monooxygenase or the notD FAD-linked oxidoreductase. This step would be followed by an indole 2,3-epoxidation-initiated pinacol-like rearrangement catalyzed by the notB FAD-dependent monooxygenase leading to the formation of notoamide C and notoamide D. On the other hand notoamide S is converted to notoamide T by notH (or notD), a bifunctional oxidase that also functions as the intramolecular Diels-Alderase responsible for generation of (+)-notoamide T. To generate antipodal (-)-notoaminide T, notH' (or notD') in Aspergillus versicolor is expected to catalyze a Diels-Alder reaction leading to the opposite stereochemistry. The remaining oxidoreductase notD (or notH) likely catalyzes the oxidative pyran ring formation to yield (+)-stephacidin A. The FAD-dependent monooxygenase notI is highly similar to notB and is predicted to catalyze a similar conversion from (+)-stephacidin A to (-)-notoamide B via the 2,3-epoxidation of (+)-stephacidin A followed by a pinacol-type rearrangement. Finally, it remains unclear which enzyme could be responsible for the final hydroxylation steps leading to notoamide A and sclerotiamide. The function of notM in the notoamide biosynthesis has not been determined yet. This Aspergillus sp. (strain MF297-2) protein is Baeyer-Villiger oxidase notM.